The sequence spans 228 residues: MSVKFQEEATRSIRADTKELAHKVGERLTGGNAQTGYLALYLRQLQSNPLRTKMLTSGLLSGLQEVLASWIANDVSKHGHYFSARVPKMTLYGMFISAPLGHLLVGILQKVFAGRTSLKAKILQILASNLIVSPIQNAVYLMSMAIIAGARTLHQVRATVKAGFMPVMKVSWITSPLALAFAQKFLPEHTWVPFFNIIGFFIGTYVNTHTKKKRLEALRKVQSTSRTK.

The next 4 membrane-spanning stretches (helical) occupy residues 89 to 109, 130 to 150, 162 to 182, and 185 to 205; these read MTLY…GILQ, LIVS…IAGA, AGFM…LAFA, and FLPE…IGTY.

This sequence belongs to the peroxisomal membrane protein PXMP2/4 family. As to quaternary structure, self-assembles into detergent-resistant oligomers and forms a complex with hexA assemblies.

It is found in the peroxisome membrane. The protein resides in the cell septum. In terms of biological role, woronin sorting complex protein involved in both Woronin bodies (WB) formation and inherence. Localizes to large peroxisome membranes where it self-assembles into detergent-resistant oligomers that envelop hex-1 assemblies, producing asymmetrical nascent WBs. These structures are then delivered to the cell cortex, which permits partitioning of the nascent WB and WB inheritance. The protein is Woronin body membrane protein wscA of Aspergillus fumigatus (strain ATCC MYA-4609 / CBS 101355 / FGSC A1100 / Af293) (Neosartorya fumigata).